Here is a 302-residue protein sequence, read N- to C-terminus: Paired immunoglobulin-like type 2 receptor alpha (302 aa).

Positions 1–31 are cleaved as a signal peptide; it reads MALLISLPGGTPAMAQILLLLSSACLHAGNS. The Extracellular segment spans residues 32–198; it reads ERSNRKNGFG…GGLDLQTTVG (167 aa). N90 and N107 each carry an N-linked (GlcNAc...) asparagine glycan. The chain crosses the membrane as a helical span at residues 199 to 219; it reads LATAAAVFLVGVLGLIVFLWW. The Cytoplasmic segment spans residues 220–302; sequence KRRRQGQKTK…ETVYSIVKAK (83 aa). A compositionally biased stretch (basic and acidic residues) spans 228-248; the sequence is TKAEIPAREPLETSEKHESVG. The interval 228–293 is disordered; that stretch reads TKAEIPAREP…LPVHGNPQEE (66 aa). Short sequence motifs (ITIM motif) lie at residues 265–270 and 294–299; these read IVYASI and TVYSIV. Residues 270-280 show a composition bias toward polar residues; it reads ISLSSPTSPGT.

In terms of assembly, interacts with CD99. Post-translationally, phosphorylated on tyrosine residues.

It localises to the membrane. In terms of biological role, paired receptors consist of highly related activating and inhibitory receptors and are widely involved in the regulation of the immune system. Receptor for CD99 and PIANP. The protein is Paired immunoglobulin-like type 2 receptor alpha (Pilra) of Mus musculus (Mouse).